The following is a 284-amino-acid chain: uncharacterized protein (284 aa).

Gln-54 lines the FMN pocket. The Proton donor role is filled by Cys-83. FMN-binding positions include Lys-125, His-153, 183 to 185, and 207 to 208; these read NGG and AN.

Belongs to the Dus family. FMN is required as a cofactor.

Its function is as follows. Catalyzes the synthesis of dihydrouridine, a modified base found in the D-loop of most tRNAs. This is an uncharacterized protein from Caenorhabditis elegans.